The sequence spans 588 residues: MNNSINHKFHHISRAEYQELLAVSRGDAVADYIIDNVSILDLINGGEISGPIVIKGRYIAGVGAEYADAPALQRIDARGATAVPGFIDAHLHIESSMMTPVTFETATLPRGLTTVICDPHEIVNVMGEAGFAWFARCAEQARQNQYLQVSSCVPALEGCDVNGASFTLEQMLAWRDHPQVTGLAEMMDYPGVISGQNALLDKLDAFRHLTLDGHCPGLGGKELNAYITAGIENCHESYQLEEGRRKLQLGMSLMIREGSAARNLNALAPLINEFNSPQCMLCTDDRNPWEIAHEGHIDALIRRLIEQHNVPLHVAYRVASWSTARHFGLNHLGLLAPGKQADIVLLSDARKVTVQQVLVKGEPIDAQTLQAEESARLAQSAPPYGNTIARQPVSASDFALQFTPGKRYRVIDVIHNELITHSHSSVYSENGFDRDDVSFIAVLERYGQRLAPACGLLGGFGLNEGALAATVSHDSHNIVVIGRSAEEMALAVNQVIQDGGGLCVVRNGQVQSHLPLPIAGLMSTDTAQLLAEQIDALKAAARECGPLPDEPFIQMAFLSLPVIPALKLTSQGLFDGEKFAFTTLEVTE.

It belongs to the metallo-dependent hydrolases superfamily. Adenine deaminase family. In terms of assembly, homodimer. Mn(2+) serves as cofactor.

The enzyme catalyses adenine + H2O + H(+) = hypoxanthine + NH4(+). This chain is Adenine deaminase, found in Escherichia coli (strain SE11).